The primary structure comprises 69 residues: Large ribosomal subunit protein bL31 (69 aa).

4 residues coordinate Zn(2+): Cys-16, Cys-18, Cys-38, and Cys-41.

The protein belongs to the bacterial ribosomal protein bL31 family. Type A subfamily. In terms of assembly, part of the 50S ribosomal subunit. Zn(2+) serves as cofactor.

Binds the 23S rRNA. The sequence is that of Large ribosomal subunit protein bL31 from Thermobifida fusca (strain YX).